The chain runs to 897 residues: Isoleucine--tRNA ligase (897 aa).

A 'HIGH' region motif is present at residues 59 to 69 (PYANGDIHVGH). Glutamate 552 lines the L-isoleucyl-5'-AMP pocket. The 'KMSKS' region motif lies at 593-597 (KMSKS). Residue lysine 596 participates in ATP binding. Residues cysteine 872, cysteine 875, cysteine 890, and cysteine 893 each contribute to the Zn(2+) site.

Belongs to the class-I aminoacyl-tRNA synthetase family. IleS type 1 subfamily. Monomer. The cofactor is Zn(2+).

It is found in the cytoplasm. It catalyses the reaction tRNA(Ile) + L-isoleucine + ATP = L-isoleucyl-tRNA(Ile) + AMP + diphosphate. Catalyzes the attachment of isoleucine to tRNA(Ile). As IleRS can inadvertently accommodate and process structurally similar amino acids such as valine, to avoid such errors it has two additional distinct tRNA(Ile)-dependent editing activities. One activity is designated as 'pretransfer' editing and involves the hydrolysis of activated Val-AMP. The other activity is designated 'posttransfer' editing and involves deacylation of mischarged Val-tRNA(Ile). The chain is Isoleucine--tRNA ligase from Mycoplasmoides gallisepticum (strain R(low / passage 15 / clone 2)) (Mycoplasma gallisepticum).